The chain runs to 115 residues: Integration host factor subunit alpha (115 aa).

It belongs to the bacterial histone-like protein family. Heterodimer of an alpha and a beta chain.

In terms of biological role, this protein is one of the two subunits of integration host factor, a specific DNA-binding protein that functions in genetic recombination as well as in transcriptional and translational control. The protein is Integration host factor subunit alpha of Burkholderia pseudomallei (strain K96243).